A 188-amino-acid chain; its full sequence is Elongation factor P (188 aa).

Belongs to the elongation factor P family.

Its subcellular location is the cytoplasm. It functions in the pathway protein biosynthesis; polypeptide chain elongation. Its function is as follows. Involved in peptide bond synthesis. Stimulates efficient translation and peptide-bond synthesis on native or reconstituted 70S ribosomes in vitro. Probably functions indirectly by altering the affinity of the ribosome for aminoacyl-tRNA, thus increasing their reactivity as acceptors for peptidyl transferase. The polypeptide is Elongation factor P (Rickettsia akari (strain Hartford)).